We begin with the raw amino-acid sequence, 309 residues long: Pyrroline-5-carboxylate reductase 1, mitochondrial (309 aa).

Ser2 carries the post-translational modification N-acetylserine. Residues 6-11 (IGAGQL) and Ser34 contribute to the NADP(+) site. Residues Ala8, Gln10, Leu11, Ser34, Asp36, Asn56, Val70, Lys71, and Ala97 each coordinate NADPH. NADP(+)-binding positions include Asn56, 69–72 (AVKP), and 95–97 (CAA). Glu164 is an L-proline binding site. Asn230 provides a ligand contact to NADPH. Positions 237 and 238 each coordinate L-proline. Phosphoserine is present on residues Ser278 and Ser301.

This sequence belongs to the pyrroline-5-carboxylate reductase family. In terms of assembly, homodecamer; composed of 5 homodimers. Interacts with LTO1. In terms of tissue distribution, highly expressed in osteoblasts and skin.

It is found in the mitochondrion. It carries out the reaction L-proline + NADP(+) = (S)-1-pyrroline-5-carboxylate + NADPH + 2 H(+). The enzyme catalyses L-proline + NAD(+) = (S)-1-pyrroline-5-carboxylate + NADH + 2 H(+). Its pathway is amino-acid biosynthesis; L-proline biosynthesis; L-proline from L-glutamate 5-semialdehyde: step 1/1. Functionally, oxidoreductase that catalyzes the last step in proline biosynthesis, which corresponds to the reduction of pyrroline-5-carboxylate to L-proline using NAD(P)H. At physiologic concentrations, has higher specific activity in the presence of NADH. Involved in the cellular response to oxidative stress. This chain is Pyrroline-5-carboxylate reductase 1, mitochondrial, found in Mus musculus (Mouse).